The primary structure comprises 99 residues: Aspartyl/glutamyl-tRNA(Asn/Gln) amidotransferase subunit C (99 aa).

This sequence belongs to the GatC family. As to quaternary structure, heterotrimer of A, B and C subunits.

The enzyme catalyses L-glutamyl-tRNA(Gln) + L-glutamine + ATP + H2O = L-glutaminyl-tRNA(Gln) + L-glutamate + ADP + phosphate + H(+). It catalyses the reaction L-aspartyl-tRNA(Asn) + L-glutamine + ATP + H2O = L-asparaginyl-tRNA(Asn) + L-glutamate + ADP + phosphate + 2 H(+). Its function is as follows. Allows the formation of correctly charged Asn-tRNA(Asn) or Gln-tRNA(Gln) through the transamidation of misacylated Asp-tRNA(Asn) or Glu-tRNA(Gln) in organisms which lack either or both of asparaginyl-tRNA or glutaminyl-tRNA synthetases. The reaction takes place in the presence of glutamine and ATP through an activated phospho-Asp-tRNA(Asn) or phospho-Glu-tRNA(Gln). The chain is Aspartyl/glutamyl-tRNA(Asn/Gln) amidotransferase subunit C from Mycolicibacterium smegmatis (strain ATCC 700084 / mc(2)155) (Mycobacterium smegmatis).